A 604-amino-acid polypeptide reads, in one-letter code: Microtubule-associated protein 70-4 (604 aa).

Positions 1–33 are disordered; the sequence is MEERGFMSPSLAISASYREGGSKGMSRRRSMRP. Positions 49–351 form a coiled coil; it reads DPVRIELNRL…ADRAAKSEAQ (303 aa). Residues 233-470 form a required for targeting to microtubules region; sequence IIDKMHRQKV…PLNHKSSEGT (238 aa). Disordered stretches follow at residues 367–422 and 434–495; these read LKGP…RSLT and GTSR…NDSV. A compositionally biased stretch (low complexity) spans 371–385; it reads TSSSSRGTSVGRSSS. Composition is skewed to polar residues over residues 401–422 and 468–478; these read PKIT…RSLT and EGTSRGESPSS. The stretch at 521–569 forms a coiled coil; the sequence is LRDKDEAIEMLAKKVETLTKAMDVEAKKMRREVAVMGKEVAAMRVVDKG.

It belongs to the MAP70 family.

It localises to the cytoplasm. The protein localises to the cytoskeleton. Plant-specific protein that interact with microtubules. This Arabidopsis thaliana (Mouse-ear cress) protein is Microtubule-associated protein 70-4 (MAP70.4).